The primary structure comprises 956 residues: Calsyntenin-3 (956 aa).

Positions 1–19 are cleaved as a signal peptide; it reads MTLLLVSLLLASLLQISSG. At 1-21 the chain is on the cytoplasmic side; sequence MTLLLVSLLLASLLQISSGNK. At 20 to 847 the chain is on the extracellular side; that stretch reads NKANKHKPWI…SHRNSMVPSA (828 aa). Positions 22-42 form an intramembrane region, helical; it reads ANKHKPWIEAEYQGIVMENDN. 2 consecutive Cadherin domains span residues 29–145 and 146–246; these read IEAE…APVF and VERL…KPSW. The Cytoplasmic portion of the chain corresponds to 43 to 73; the sequence is TVLLNPPLFALDKDAPLRYAGEICGFRLHGS. An intramembrane region (helical) is located at residues 74-94; the sequence is GVPFEAVILDKATGEGLIRAK. At 95-139 the chain is on the cytoplasmic side; it reads EPVDCEAQKEHTFTIQAYDCGEGPDGTNTKKSHKATVHVRVNDVN. Positions 140 to 160 form an intramembrane region, helical; it reads EFAPVFVERLYRAAVTEGKLY. The Cytoplasmic segment spans residues 161 to 248; the sequence is DRILRVEAID…KPTCKPSWQG (88 aa). A helical membrane pass occupies residues 249–269; that stretch reads WNKRIEYAPGAGSLALFPGIR. The Lumenal segment spans residues 270–357; sequence LETCDEPLWN…GTQAVQVPLG (88 aa). N-linked (GlcNAc...) asparagine glycosylation is found at N299, N327, N347, N507, and N740. The helical transmembrane segment at 848–868 threads the bilayer; that stretch reads ATLIIVVCVGFLVLMVILGLV. At 869–956 the chain is on the cytoplasmic side; the sequence is RIHSLHRRVS…RIIESPPHRY (88 aa). Residues 916–956 are disordered; the sequence is QTCVAGVAGGQQEEEDSSDSEAADSPSSDERRIIESPPHRY. Acidic residues predominate over residues 927–937; it reads QEEEDSSDSEA. A compositionally biased stretch (basic and acidic residues) spans 943 to 956; sequence SDERRIIESPPHRY.

The protein belongs to the calsyntenin family. In terms of assembly, interacts (via cadherin domains) with both alpha and beta isoforms of neurexins (NRXN1, NRXN2 and NRXN3). Directly interacts with APBA2. Forms a tripartite complex with APBA2 and APP. Interacts with low affinity with KLC1. Interacts with SLC23A2/SVCT2. Interacts with CIDEA; inhibiting the lipid transferase activity of CIDEA. Interacts with CIDEC; inhibiting the lipid transferase activity of CIDEC. Proteolytically processed under normal cellular conditions. A primary zeta-cleavage generates a large extracellular (soluble) N-terminal domain (sAlc) and a short C-terminal transmembrane fragment (CTF1). A secondary cleavage catalyzed by gamma-secretase within the transmembrane domain releases the beta-Alc-beta chain in the extracellular milieu and produces an intracellular fragment (AlcICD). This processing is strongly suppressed in the tripartite complex formed with APBA2 and APP, which seems to prevent the association with gamma-secretase. In terms of processing, ubiquitinated: endoplasmic reticulum-localized protein is ubiquitinated and degraded by the endoplasmic reticulum-associated degradation (ERAD) pathway. As to expression, restricted to the brain (at protein level). In the cerebral cortex, found in the somas and neuropil of all layers. Expressed at highest levels in neurons of cortical layer 5 and, at lower levels, in neurons of the upper layers. Highly expressed in Purkinje cells. Also found in a few scattered interneurons throughout the granule cell layer and occasionally in neurons in the molecular layer (at protein level). In all layers, high levels in a subpopulation of presumptive GABAergic neurons (based on morphology). Expression is restricted to adipose tissue, with high expression in thermogenic adipocytes (brown adipose tissue).

It localises to the postsynaptic cell membrane. The protein localises to the endoplasmic reticulum membrane. The protein resides in the golgi apparatus membrane. Its subcellular location is the cell projection. It is found in the dendrite. It localises to the lipid droplet. Functionally, postsynaptic adhesion molecule that binds to presynaptic neurexins to mediate both excitatory and inhibitory synapse formation. Promotes synapse development by acting as a cell adhesion molecule at the postsynaptic membrane, which associates with both neurexin-alpha and neurexin-beta proteins at the presynaptic membrane. Regulates the balance between excitatory and inhibitory synapses by inhibiting formation of excitatory parallel-fiber synapses and promoting formation of inhibitory synapses in the same neuron. May also be involved in ascorbate (vitamin C) uptake via its interaction with SLC23A2/SVCT2. Complex formation with APBA2 and APP, stabilizes APP metabolism and enhances APBA2-mediated suppression of beta-APP40 secretion, due to the retardation of intracellular APP maturation. In terms of biological role, adipose-specific isoform that plays a key role in adaptive thermogenesis. Facilitates the efficient use of stored triglyceride by promoting multilocular morphology of thermogenic adipocytes: acts by inhibiting the activity of CIDEA and CIDEC on lipid droplets, thereby preventing lipid droplet fusion and facilitating lipid utilization. May also participate in adaptive thermogenesis by promoting sympathetic innervation of thermogenic adipose tissue: acts by driving secretion of neurotrophic factor S100B from brown adipocytes, stimulating neurite outgrowth from sympathetic neurons. This Mus musculus (Mouse) protein is Calsyntenin-3.